The following is a 147-amino-acid chain: PTPN13-like protein, Y-linked (147 aa).

As to expression, expressed in testis. Detected in spermatocytes, spermatids and spermatozoa (at protein level).

The protein is PTPN13-like protein, Y-linked (PRY) of Homo sapiens (Human).